A 158-amino-acid chain; its full sequence is Tryptophan-rich sensory protein (158 aa).

5 helical membrane-spanning segments follow: residues 5–25 (WALFLTFLAACGAPATTGALL), 44–65 (WVFPLAWTSLYFLMSLAAMRVA), 73–93 (ALAFYAAQLAFNTLWTPVFFG), 97–119 (MATALAVVMVMWLFVAATMWAFF), and 124–144 (WAGVLFVPYLIWATAATGLNF).

This sequence belongs to the TspO/BZRP family. Homodimer.

It is found in the membrane. It localises to the cell inner membrane. In terms of biological role, may play a role in the transmembrane transport of tetrapyrroles and similar compounds, and thereby contribute to the regulation of tetrapyrrole biosynthesis. Binds tetrapyrroles and promotes the photooxidative degradation of protoporphyrin IX. Binds protoporphyrin IX, hemin, and coproporphyrin III, but does not bind delta-aminolevulinic acid. Can bind bilirubin, curcumin, gossypol, retinoic acid, cholesterol and the benzodiazepine receptor agonist PK-11195 (in vitro). Plays a role in the response to low oxygen levels and in the regulation of the biosynthesis of photosynthetic pigments. The chain is Tryptophan-rich sensory protein from Cereibacter sphaeroides (Rhodobacter sphaeroides).